The primary structure comprises 271 residues: Formamidopyrimidine-DNA glycosylase (271 aa).

The active-site Schiff-base intermediate with DNA is the proline 2. Residue glutamate 3 is the Proton donor of the active site. Lysine 58 (proton donor; for beta-elimination activity) is an active-site residue. DNA is bound by residues histidine 91, arginine 110, and arginine 152. The FPG-type zinc finger occupies 237-271 (WVYGRAGQSCRQCGELVSKTRQGQRSTFFCARCQH). Arginine 261 acts as the Proton donor; for delta-elimination activity in catalysis.

It belongs to the FPG family. Monomer. It depends on Zn(2+) as a cofactor.

It carries out the reaction Hydrolysis of DNA containing ring-opened 7-methylguanine residues, releasing 2,6-diamino-4-hydroxy-5-(N-methyl)formamidopyrimidine.. The catalysed reaction is 2'-deoxyribonucleotide-(2'-deoxyribose 5'-phosphate)-2'-deoxyribonucleotide-DNA = a 3'-end 2'-deoxyribonucleotide-(2,3-dehydro-2,3-deoxyribose 5'-phosphate)-DNA + a 5'-end 5'-phospho-2'-deoxyribonucleoside-DNA + H(+). In terms of biological role, involved in base excision repair of DNA damaged by oxidation or by mutagenic agents. Acts as a DNA glycosylase that recognizes and removes damaged bases. Has a preference for oxidized purines, such as 7,8-dihydro-8-oxoguanine (8-oxoG). Has AP (apurinic/apyrimidinic) lyase activity and introduces nicks in the DNA strand. Cleaves the DNA backbone by beta-delta elimination to generate a single-strand break at the site of the removed base with both 3'- and 5'-phosphates. In Nitrosomonas europaea (strain ATCC 19718 / CIP 103999 / KCTC 2705 / NBRC 14298), this protein is Formamidopyrimidine-DNA glycosylase.